Reading from the N-terminus, the 29-residue chain is Cytochrome b6-f complex subunit 8 (29 aa).

A helical transmembrane segment spans residues 3–23; sequence IVNIAWAALMVVSTFSLTLVV.

It belongs to the PetN family. As to quaternary structure, the 4 large subunits of the cytochrome b6-f complex are cytochrome b6, subunit IV (17 kDa polypeptide, PetD), cytochrome f and the Rieske protein, while the 4 small subunits are PetG, PetL, PetM and PetN. The complex functions as a dimer.

It localises to the plastid. The protein resides in the chloroplast thylakoid membrane. Component of the cytochrome b6-f complex, which mediates electron transfer between photosystem II (PSII) and photosystem I (PSI), cyclic electron flow around PSI, and state transitions. The protein is Cytochrome b6-f complex subunit 8 of Huperzia lucidula (Shining clubmoss).